The following is a 999-amino-acid chain: Golgin subfamily A member 2 (999 aa).

Positions Met1–Pro11 are enriched in pro residues. Disordered stretches follow at residues Met1–Pro80 and Ala244–Asp288. The tract at residues Met1–Thr86 is interaction with p115/USO1. Arg18 and Arg30 each carry dimethylated arginine. Residues Lys26–Lys49 carry the Nuclear localization signal motif. 4 positions are modified to phosphoserine: Ser37, Ser66, Ser273, and Ser438. Residues Leu147–Glu895 are a coiled coil. Over residues Thr271–Lys280 the composition is skewed to polar residues. The tract at residues Ser444 to Glu468 is disordered. Positions Glu448–Gly457 are enriched in pro residues. A phosphoserine mark is found at Ser697, Ser934, and Ser978. An interaction with GORASP1/GRASP65 region spans residues Asp989–Val999.

It belongs to the GOLGA2 family. Homodimer, may assemble into homohexamers. Homotetramer; forms a parallel homotetramer with a flexible rod-like structure that can give rise to I- and Y-shaped conformations. Interacts with GORASP1/GRASP65. The homooligomer forms a complex with GORASP1 with a 1:1 stoichiometry. Interacts with RAB1B that has been activated by GTP-binding. Interacts with p115/USO1; interaction with p115/USO1 inhibits interaction with STX5 and/or RAB1B. Interacts with STX5. Interacts with ZFPL1. Interacts with AKAP450/AKAP9; leading to recruit AKAP450/AKAP9 to the cis-Golgi. Post-translationally, phosphorylated at Ser-37 by CDK1 at the onset of mitosis, inhibiting the interaction with p115/USO1 and triggering Golgi disassembly. A report however suggests that Golgi disassembly is independent of phosphorylation at Ser-37. Phosphorylated at Ser-37 in prophase as the Golgi complex starts to break down, and remains phosphorylated during further breakdown and partitioning of the Golgi fragments in metaphase and anaphase. In telophase, GM130 is dephosphorylated by PP2A as the Golgi fragments start to reassemble. Cleaved by caspases at the onset of apoptosis. In terms of processing, methylation by PRMT5 is required for Golgi ribbon formation. Widely expressed. Detected in brain, kidney, lung, liver, spleen, heart, skeletal muscle, thymus and pancreas. Detected in spermatocytes. Present in oocytes during all oocyte meiotic maturation (at protein level).

The protein localises to the golgi apparatus. Its subcellular location is the cis-Golgi network membrane. The protein resides in the endoplasmic reticulum-Golgi intermediate compartment membrane. It is found in the cytoplasm. It localises to the cytoskeleton. The protein localises to the spindle pole. Functionally, peripheral membrane component of the cis-Golgi stack that acts as a membrane skeleton that maintains the structure of the Golgi apparatus, and as a vesicle thether that facilitates vesicle fusion to the Golgi membrane. Required for normal protein transport from the endoplasmic reticulum to the Golgi apparatus and the cell membrane. Together with p115/USO1 and STX5, involved in vesicle tethering and fusion at the cis-Golgi membrane to maintain the stacked and inter-connected structure of the Golgi apparatus. Plays a central role in mitotic Golgi disassembly: phosphorylation at Ser-37 by CDK1 at the onset of mitosis inhibits the interaction with p115/USO1, preventing tethering of COPI vesicles and thereby inhibiting transport through the Golgi apparatus during mitosis. Also plays a key role in spindle pole assembly and centrosome organization. Promotes the mitotic spindle pole assembly by activating the spindle assembly factor TPX2 to nucleate microtubules around the Golgi and capture them to couple mitotic membranes to the spindle: upon phosphorylation at the onset of mitosis, GOLGA2 interacts with importin-alpha via the nuclear localization signal region, leading to recruit importin-alpha to the Golgi membranes and liberate the spindle assembly factor TPX2 from importin-alpha. TPX2 then activates AURKA kinase and stimulates local microtubule nucleation. Upon filament assembly, nascent microtubules are further captured by GOLGA2, thus linking Golgi membranes to the spindle. Regulates the meiotic spindle pole assembly, probably via the same mechanism. Also regulates the centrosome organization. Also required for the Golgi ribbon formation and glycosylation of membrane and secretory proteins. This is Golgin subfamily A member 2 (Golga2) from Mus musculus (Mouse).